The primary structure comprises 482 residues: Aspartyl/glutamyl-tRNA(Asn/Gln) amidotransferase subunit B (482 aa).

This sequence belongs to the GatB/GatE family. GatB subfamily. Heterotrimer of A, B and C subunits.

It catalyses the reaction L-glutamyl-tRNA(Gln) + L-glutamine + ATP + H2O = L-glutaminyl-tRNA(Gln) + L-glutamate + ADP + phosphate + H(+). The enzyme catalyses L-aspartyl-tRNA(Asn) + L-glutamine + ATP + H2O = L-asparaginyl-tRNA(Asn) + L-glutamate + ADP + phosphate + 2 H(+). Functionally, allows the formation of correctly charged Asn-tRNA(Asn) or Gln-tRNA(Gln) through the transamidation of misacylated Asp-tRNA(Asn) or Glu-tRNA(Gln) in organisms which lack either or both of asparaginyl-tRNA or glutaminyl-tRNA synthetases. The reaction takes place in the presence of glutamine and ATP through an activated phospho-Asp-tRNA(Asn) or phospho-Glu-tRNA(Gln). The polypeptide is Aspartyl/glutamyl-tRNA(Asn/Gln) amidotransferase subunit B (Methanoregula boonei (strain DSM 21154 / JCM 14090 / 6A8)).